Here is a 347-residue protein sequence, read N- to C-terminus: Anthranilate phosphoribosyltransferase (347 aa).

Residues glycine 88, 91-92, threonine 96, 98-101, 116-124, and serine 128 contribute to the 5-phospho-alpha-D-ribose 1-diphosphate site; these read GD, NIST, and KHGNRSVSS. Glycine 88 is an anthranilate binding site. Position 100 (serine 100) interacts with Mg(2+). Asparagine 119 serves as a coordination point for anthranilate. Residue arginine 174 coordinates anthranilate. Aspartate 232 and glutamate 233 together coordinate Mg(2+).

Belongs to the anthranilate phosphoribosyltransferase family. As to quaternary structure, homodimer. Mg(2+) serves as cofactor.

It carries out the reaction N-(5-phospho-beta-D-ribosyl)anthranilate + diphosphate = 5-phospho-alpha-D-ribose 1-diphosphate + anthranilate. It participates in amino-acid biosynthesis; L-tryptophan biosynthesis; L-tryptophan from chorismate: step 2/5. Its function is as follows. Catalyzes the transfer of the phosphoribosyl group of 5-phosphorylribose-1-pyrophosphate (PRPP) to anthranilate to yield N-(5'-phosphoribosyl)-anthranilate (PRA). The sequence is that of Anthranilate phosphoribosyltransferase from Shewanella sp. (strain MR-4).